The following is a 363-amino-acid chain: Ribosome-binding ATPase YchF (363 aa).

The 254-residue stretch at 3–256 (FKCGIVGLPN…LDDDEKIEFL (254 aa)) folds into the OBG-type G domain. An ATP-binding site is contributed by 12–17 (NVGKST). The Mg(2+) site is built by Ser16 and Thr36. In terms of domain architecture, TGS spans 278–361 (NLQTYFTAGV…QDGDVMHFRF (84 aa)).

The protein belongs to the TRAFAC class OBG-HflX-like GTPase superfamily. OBG GTPase family. YchF/OLA1 subfamily. Mg(2+) is required as a cofactor.

ATPase that binds to both the 70S ribosome and the 50S ribosomal subunit in a nucleotide-independent manner. This Pasteurella multocida (strain Pm70) protein is Ribosome-binding ATPase YchF.